The primary structure comprises 574 residues: Serine carboxypeptidase ctsa-3.1 (574 aa).

The N-terminal stretch at 1–19 is a signal peptide; that stretch reads MCRTLLGVAFLVVTVLSQG. Asn-48 and Asn-163 each carry an N-linked (GlcNAc...) asparagine glycan. The active site involves Ser-172. 4 N-linked (GlcNAc...) asparagine glycosylation sites follow: Asn-241, Asn-408, Asn-414, and Asn-426. Residues Asp-441 and His-507 contribute to the active site. Asn-534 is a glycosylation site (N-linked (GlcNAc...) asparagine).

The protein belongs to the peptidase S10 family.

The polypeptide is Serine carboxypeptidase ctsa-3.1 (Caenorhabditis elegans).